We begin with the raw amino-acid sequence, 488 residues long: Ribosomal RNA small subunit methyltransferase F (488 aa).

S-adenosyl-L-methionine contacts are provided by residues A135–K141, E159, D186, and D204. The active-site Nucleophile is the C257.

This sequence belongs to the class I-like SAM-binding methyltransferase superfamily. RsmB/NOP family.

It localises to the cytoplasm. The catalysed reaction is cytidine(1407) in 16S rRNA + S-adenosyl-L-methionine = 5-methylcytidine(1407) in 16S rRNA + S-adenosyl-L-homocysteine + H(+). Functionally, specifically methylates the cytosine at position 1407 (m5C1407) of 16S rRNA. This is Ribosomal RNA small subunit methyltransferase F from Shewanella pealeana (strain ATCC 700345 / ANG-SQ1).